A 326-amino-acid chain; its full sequence is tRNA-modifying protein YgfZ (326 aa).

Folate contacts are provided by Trp-27 and Trp-189.

The protein belongs to the tRNA-modifying YgfZ family.

It localises to the cytoplasm. Folate-binding protein involved in regulating the level of ATP-DnaA and in the modification of some tRNAs. It is probably a key factor in regulatory networks that act via tRNA modification, such as initiation of chromosomal replication. This Shigella boydii serotype 18 (strain CDC 3083-94 / BS512) protein is tRNA-modifying protein YgfZ.